The sequence spans 753 residues: Rsm22-cox11 tandem protein 2, mitochondrial (753 aa).

The transit peptide at 1-39 (MPILTCRYKILFLYNLRNCFTFQNQRCLIPYGTTTTIRW) directs the protein to the mitochondrion. [4Fe-4S] cluster contacts are provided by Cys323, Cys329, Cys342, and Cys430. Residues 571-591 (IYYLVAISIFALGLTYAAVPL) traverse the membrane as a helical segment. Residues 592 to 753 (YRLFCSKTGY…TNGNLLTKLN (162 aa)) lie on the Mitochondrial intermembrane side of the membrane.

In the N-terminal section; belongs to the methyltransferase superfamily. Rsm22 family. It in the C-terminal section; belongs to the COX11/CtaG family. As to quaternary structure, associates with the mitochondrial ribosome (mitoribosome). Only transiently interacts with the mitoribosome. Specific enzymatic cleavages in vivo by mitochondrial processing peptidase (MPP) yield mature proteins including rsm22-2 and cox11-2.

The protein localises to the mitochondrion. Its subcellular location is the mitochondrion inner membrane. Mitochondrial ribosome (mitoribosome) assembly factor. Binds at the interface of the head and body domains of the mitochondrial small ribosomal subunit (mt-SSU), occluding the mRNA channel and preventing compaction of the head domain towards the body. Probable inactive methyltransferase: retains the characteristic folding and ability to bind S-adenosyl-L-methionine, but it probably lost its methyltransferase activity. Functionally, exerts its effect at some terminal stage of cytochrome c oxidase synthesis, probably by being involved in the insertion of the copper B into subunit I. This chain is Rsm22-cox11 tandem protein 2, mitochondrial (cox1102), found in Schizosaccharomyces pombe (strain 972 / ATCC 24843) (Fission yeast).